Reading from the N-terminus, the 258-residue chain is 5'-nucleotidase SurE (258 aa).

4 residues coordinate a divalent metal cation: D9, D10, S42, and N96.

This sequence belongs to the SurE nucleotidase family. The cofactor is a divalent metal cation.

It is found in the cytoplasm. The enzyme catalyses a ribonucleoside 5'-phosphate + H2O = a ribonucleoside + phosphate. Nucleotidase that shows phosphatase activity on nucleoside 5'-monophosphates. This is 5'-nucleotidase SurE from Campylobacter jejuni subsp. jejuni serotype O:23/36 (strain 81-176).